The chain runs to 118 residues: Large ribosomal subunit protein bL19 (118 aa).

Belongs to the bacterial ribosomal protein bL19 family.

Its function is as follows. This protein is located at the 30S-50S ribosomal subunit interface and may play a role in the structure and function of the aminoacyl-tRNA binding site. The chain is Large ribosomal subunit protein bL19 from Teredinibacter turnerae (strain ATCC 39867 / T7901).